A 195-amino-acid chain; its full sequence is MELPVRLVVGLGNPGEKYASTRHNVGFDWLDRLASSQRVAFTLETRFRGLCARIMLADTDIWLLKPQTYMNASGMSVAAVCRYYKIVPEQMLVVHDELDLQPGVIKLKSGGGTGGHNGLKSIVADLSSQVFWRLRIGVGHPGDRNQVVDYVLHPPRREEAALIDEAIDHSMQVWPLIARGDFAAAMQRLHTRQEN.

Residue Tyr-18 coordinates tRNA. The active-site Proton acceptor is His-23. TRNA is bound by residues Tyr-69, Asn-71, and Asn-117.

The protein belongs to the PTH family. Monomer.

It localises to the cytoplasm. The catalysed reaction is an N-acyl-L-alpha-aminoacyl-tRNA + H2O = an N-acyl-L-amino acid + a tRNA + H(+). Functionally, hydrolyzes ribosome-free peptidyl-tRNAs (with 1 or more amino acids incorporated), which drop off the ribosome during protein synthesis, or as a result of ribosome stalling. Catalyzes the release of premature peptidyl moieties from peptidyl-tRNA molecules trapped in stalled 50S ribosomal subunits, and thus maintains levels of free tRNAs and 50S ribosomes. This chain is Peptidyl-tRNA hydrolase, found in Nitrosomonas europaea (strain ATCC 19718 / CIP 103999 / KCTC 2705 / NBRC 14298).